The sequence spans 320 residues: Ferrochelatase (320 aa).

Positions 194 and 275 each coordinate Fe cation.

The protein belongs to the ferrochelatase family. Monomer.

It localises to the cytoplasm. The enzyme catalyses heme b + 2 H(+) = protoporphyrin IX + Fe(2+). The protein operates within porphyrin-containing compound metabolism; protoheme biosynthesis; protoheme from protoporphyrin-IX: step 1/1. Its function is as follows. Catalyzes the ferrous insertion into protoporphyrin IX. The chain is Ferrochelatase from Shigella dysenteriae serotype 1 (strain Sd197).